We begin with the raw amino-acid sequence, 460 residues long: MLO-like protein 9 (460 aa).

Topologically, residues 1-21 are extracellular; that stretch reads MAGGGGGGGGEGPRQLDQTPT. A helical membrane pass occupies residues 22–42; that stretch reads WAVSTVCGVIILISIILELII. Residues 43 to 67 lie on the Cytoplasmic side of the membrane; that stretch reads HKVGEVFERKKKKALFEALEKIKNE. The chain crosses the membrane as a helical span at residues 68 to 88; it reads LMVLGFISLLLTFGQNYIASI. Over 89–158 the chain is Extracellular; it reads CVPSRYGHAM…ISLNALHQVH (70 aa). Residues 159-179 form a helical membrane-spanning segment; it reads IFIFFLAVFHVIYSAITMMLG. The Cytoplasmic portion of the chain corresponds to 180–289; it reads RAKIRGWKVW…KVVVGIRPEL (110 aa). The chain crosses the membrane as a helical span at residues 290-310; it reads WAFVMLFLLFDVHGWYVTAVI. The Extracellular segment spans residues 311-315; it reads TMIPP. The helical transmembrane segment at 316 to 336 threads the bilayer; sequence LLTLAIGTKLQAIISYMALEI. Over 337 to 366 the chain is Cytoplasmic; that stretch reads QERHAVIQGMPVVNVSDQHFWFEKPDLVLH. Residues 367-387 traverse the membrane as a helical segment; sequence MIHFVLFQNAFEITYFFWIWY. Residues 388–398 lie on the Extracellular side of the membrane; the sequence is EFGLRSCFHHH. A helical membrane pass occupies residues 399–419; that stretch reads FGLIIIRVCLGVGVQFLCSYI. The Cytoplasmic portion of the chain corresponds to 420 to 460; it reads TLPLYALVTQMGSTMKRSVFDEQTSKALEQWHKKARKKNEK. Positions 441–460 are calmodulin-binding; the sequence is EQTSKALEQWHKKARKKNEK.

Belongs to the MLO family.

Its subcellular location is the membrane. In terms of biological role, may be involved in modulation of pathogen defense and leaf cell death. Activity seems to be regulated by Ca(2+)-dependent calmodulin binding and seems not to require heterotrimeric G proteins. In Arabidopsis thaliana (Mouse-ear cress), this protein is MLO-like protein 9 (MLO9).